A 582-amino-acid polypeptide reads, in one-letter code: GPI-anchor transamidase component PIGT (582 aa).

Positions 1-25 (MAAAMPLGLPLRLLVLLLVGRGCCG) are cleaved as a signal peptide. Over 26–529 (CAEGPRDSLR…NLPTPDFSMP (504 aa)) the chain is Lumenal. The N-linked (GlcNAc...) asparagine glycan is linked to N168. 2 cysteine pairs are disulfide-bonded: C199–C276 and C230–C235. N-linked (GlcNAc...) asparagine glycosylation is found at N295 and N331. A 2-acyl-6-[6-phosphoethanolamine-alpha-D-mannosyl-(1-&gt;2)-6-phosphoethanolamine-alpha-D-mannosyl-(1-&gt;6)-2-phosphoethanolamine-alpha-D-mannosyl-(1-&gt;4)-alpha-D-glucosaminyl]-1-(1-radyl,2-acyl-sn-glycero-3-phospho)-1D-myo-inositol-binding residues include N465, D525, S527, and N531. A helical transmembrane segment spans residues 530–552 (YNVICLTCTVVAVCYGSFYNLLT). Residues 553–582 (RTFHIEEPKSGGLAKRLANLIRRARGVPPL) are Cytoplasmic-facing.

This sequence belongs to the PIGT family. In terms of assembly, heteropentamer. Part of the GPI-anchor transamidase complex, consisting of PIGK, PIGT, PIGS, PIGU and GAA1. Post-translationally, the disulfide bond between PIGK/GPI8 and PIGT is important for normal enzyme activity.

The protein localises to the endoplasmic reticulum membrane. The protein operates within glycolipid biosynthesis; glycosylphosphatidylinositol-anchor biosynthesis. In terms of biological role, component of the glycosylphosphatidylinositol-anchor (GPI-anchor) transamidase (GPI-T) complex that catalyzes the formation of the linkage between a proprotein and a GPI-anchor and participates in GPI anchored protein biosynthesis. May play a crucial role in GPI-T complex assembly in the luminal layer. Binds GPI-anchor. This Mus musculus (Mouse) protein is GPI-anchor transamidase component PIGT.